Here is a 700-residue protein sequence, read N- to C-terminus: Elongation factor G (700 aa).

One can recognise a tr-type G domain in the interval 13–288 (SKIRNIGITA…AVIDYLPAPD (276 aa)). GTP contacts are provided by residues 22 to 29 (AHIDAGKT), 86 to 90 (DTPGH), and 140 to 143 (NKLD).

Belongs to the TRAFAC class translation factor GTPase superfamily. Classic translation factor GTPase family. EF-G/EF-2 subfamily.

It localises to the cytoplasm. Functionally, catalyzes the GTP-dependent ribosomal translocation step during translation elongation. During this step, the ribosome changes from the pre-translocational (PRE) to the post-translocational (POST) state as the newly formed A-site-bound peptidyl-tRNA and P-site-bound deacylated tRNA move to the P and E sites, respectively. Catalyzes the coordinated movement of the two tRNA molecules, the mRNA and conformational changes in the ribosome. This chain is Elongation factor G, found in Gluconobacter oxydans (strain 621H) (Gluconobacter suboxydans).